Here is a 776-residue protein sequence, read N- to C-terminus: Protein translocase subunit SecA 2 (776 aa).

ATP contacts are provided by residues Gln80, 98–102, and Asp486; that span reads GEGKT.

It belongs to the SecA family. As to quaternary structure, monomer and homodimer. Part of the essential Sec protein translocation apparatus which comprises SecA, SecYEG and auxiliary proteins SecDF. Other proteins may also be involved.

It localises to the cell membrane. Its subcellular location is the cytoplasm. The enzyme catalyses ATP + H2O + cellular proteinSide 1 = ADP + phosphate + cellular proteinSide 2.. In terms of biological role, part of the Sec protein translocase complex. Interacts with the SecYEG preprotein conducting channel. Has a central role in coupling the hydrolysis of ATP to the transfer of proteins into and across the cell membrane, serving as an ATP-driven molecular motor driving the stepwise translocation of polypeptide chains across the membrane. This Listeria monocytogenes serotype 4b (strain F2365) protein is Protein translocase subunit SecA 2.